Consider the following 204-residue polypeptide: Large ribosomal subunit protein eL15 (204 aa).

Belongs to the eukaryotic ribosomal protein eL15 family. As to quaternary structure, component of the large ribosomal subunit.

Its subcellular location is the cytoplasm. Component of the large ribosomal subunit. The ribosome is a large ribonucleoprotein complex responsible for the synthesis of proteins in the cell. The protein is Large ribosomal subunit protein eL15 (rpl15) of Paramisgurnus dabryanus.